The following is a 591-amino-acid chain: MDDHNLDYKGSGALEELEMLTVNAKEAQELILTKILERNQATEYLSKFMNGSTNISAFKRHVPVVTYDKVHPYILRIATGEESSILCGEYILELLRSSGTSRGEPRLMPSILKDLDRRTYLYSLIMPIMNKYISGLGEGKAMYLLFVKAETLTDSGIPVRSVLTSYYKSPHFLHRKHDLYNNYTSPDEVILCPDSQQSMYCQLLCGLVERQHVLRIGAVFASAFLRSISFLEQHWRDLVNDIRIGQLNSSITSPACRLAMLNFLALPNPELADQVEAICSCGSWKGILGRLWPNVKYIEAVLTGTMAQYIPMLEFYGGGAIPFVCTMYASSESYFGVNLSPLCSPADVSYTILPNMAYFEFIPLEDGLRLTDHEEVIENDKLVSLVDVKVGCYYELVVTTFSGLYRYRVGDVLQVTGFYNRAPQFKFICRRNVILSIDSDKTNEEDLHNSVTTAKKILENQNYLLLEYTSYTDISTVPGHYVLFWEIKSTHDERPAPLDAQLLESCCAAVEESLDYVYRRCRAHDRSIGPLEIRLVEAGAFDALMDLLVSHGSSINQYKTPRCIESSLALKLLNSKVIACFFSPQDPECGM.

The protein belongs to the IAA-amido conjugating enzyme family. Expressed in etiolated and green seedlings, roots, callus and highly in flowers.

Functionally, may catalyze the synthesis of indole-3-acetic acid (IAA)-amino acid conjugates, providing a mechanism for the plant to cope with the presence of excess auxin. In Oryza sativa subsp. japonica (Rice), this protein is Probable indole-3-acetic acid-amido synthetase GH3.11 (GH3.11).